Consider the following 372-residue polypeptide: Geranylgeranyl pyrophosphate synthase 4 (372 aa).

The first 22 residues, 1–22 (MEAQNIFLYLLIVFLSLHFVFT), serve as a signal peptide directing secretion. Lys-121, Arg-124, and His-153 together coordinate isopentenyl diphosphate. 2 residues coordinate Mg(2+): Asp-160 and Asp-166. Arg-171 provides a ligand contact to dimethylallyl diphosphate. Arg-172 serves as a coordination point for isopentenyl diphosphate. 5 residues coordinate dimethylallyl diphosphate: Lys-257, Thr-258, Gln-295, Lys-312, and Lys-322.

The protein belongs to the FPP/GGPP synthase family. Monomer. It depends on Mg(2+) as a cofactor. In terms of tissue distribution, faintly expressed in flowers. Expressed in roots and siliques.

It is found in the endoplasmic reticulum. It carries out the reaction isopentenyl diphosphate + dimethylallyl diphosphate = (2E)-geranyl diphosphate + diphosphate. It catalyses the reaction isopentenyl diphosphate + (2E)-geranyl diphosphate = (2E,6E)-farnesyl diphosphate + diphosphate. The catalysed reaction is isopentenyl diphosphate + (2E,6E)-farnesyl diphosphate = (2E,6E,10E)-geranylgeranyl diphosphate + diphosphate. The protein operates within isoprenoid biosynthesis; farnesyl diphosphate biosynthesis; farnesyl diphosphate from geranyl diphosphate and isopentenyl diphosphate: step 1/1. It functions in the pathway isoprenoid biosynthesis; geranyl diphosphate biosynthesis; geranyl diphosphate from dimethylallyl diphosphate and isopentenyl diphosphate: step 1/1. It participates in isoprenoid biosynthesis; geranylgeranyl diphosphate biosynthesis; geranylgeranyl diphosphate from farnesyl diphosphate and isopentenyl diphosphate: step 1/1. Its function is as follows. Catalyzes the trans-addition of the three molecules of isopentenyl diphosphate (IPP) onto dimethylallyl diphosphate (DMAPP) to form geranylgeranyl diphosphate. This Arabidopsis thaliana (Mouse-ear cress) protein is Geranylgeranyl pyrophosphate synthase 4.